The chain runs to 254 residues: Casein kinase II subunit beta-2 (254 aa).

It belongs to the casein kinase 2 subunit beta family. In terms of assembly, tetramer composed of two alpha chains, one beta chain and one beta' chain. In terms of processing, phosphorylated by alpha subunit.

Functionally, regulatory subunit of casein kinase II/CK2. As part of the kinase complex regulates the basal catalytic activity of the alpha subunit a constitutively active serine/threonine-protein kinase that phosphorylates a large number of substrates containing acidic residues C-terminal to the phosphorylated serine or threonine. The polypeptide is Casein kinase II subunit beta-2 (Schizosaccharomyces pombe (strain 972 / ATCC 24843) (Fission yeast)).